The primary structure comprises 491 residues: MDRVGSLPDELLSHILSFLTTKEAALTSLLSKRWRYLIAFVPNLAFDDIVFLHPEEGKPERDEIRQSFMDFVDRVLALQAESPIKKFSLKCRIGVDSDRVDGWISNVLNRGVSELDLLIILGMTMEDSYRLSPKGFASKTLVKLEIGCGIDISWVAGSIFLPMLKTLVLDSVWFYVDKFETLLLALPALEELVLVDVNWLDSDVTISNASLKTLTIDSDGHLGTFSFDTPSLVYFCYSDYAAEDYPVVKMENLREARIFLLVTDNEIERVRLPINDGLEDAMDNVVLRFGHVGKLMNGIRNVEYLELSADTLEVLSLCCESMPVFKNLKSLAIKSTEGRGWQAMPVLLRNCPHLEFLLIEGLLHHVTDKCGDACDCVPREDKGRSLTSCPVNMLEIHGFRGTKKEMQMIKHFLDYFPSLKEMDIYADEDGPTNLEAPGMFEQITQLFTLYDEFYTCDVQFMVRGSLYKKLTAQCCVFKEENLPHRLVRTLG.

The F-box domain occupies 1 to 49; that stretch reads MDRVGSLPDELLSHILSFLTTKEAALTSLLSKRWRYLIAFVPNLAFDDI.

In terms of assembly, part of a SCF (ASK-cullin-F-box) protein ligase complex. Interacts with ASK4.

It is found in the nucleus. It participates in protein modification; protein ubiquitination. Its function is as follows. Component of SCF(ASK-cullin-F-box) E3 ubiquitin ligase complexes, which may mediate the ubiquitination and subsequent proteasomal degradation of target proteins. The chain is F-box protein At3g59000 from Arabidopsis thaliana (Mouse-ear cress).